Here is a 496-residue protein sequence, read N- to C-terminus: Probable cytosol aminopeptidase (496 aa).

Residues Lys-252 and Asp-257 each coordinate Mn(2+). The active site involves Lys-264. Positions 275, 334, and 336 each coordinate Mn(2+). Arg-338 is a catalytic residue.

Belongs to the peptidase M17 family. Mn(2+) is required as a cofactor.

Its subcellular location is the cytoplasm. The catalysed reaction is Release of an N-terminal amino acid, Xaa-|-Yaa-, in which Xaa is preferably Leu, but may be other amino acids including Pro although not Arg or Lys, and Yaa may be Pro. Amino acid amides and methyl esters are also readily hydrolyzed, but rates on arylamides are exceedingly low.. The enzyme catalyses Release of an N-terminal amino acid, preferentially leucine, but not glutamic or aspartic acids.. Functionally, presumably involved in the processing and regular turnover of intracellular proteins. Catalyzes the removal of unsubstituted N-terminal amino acids from various peptides. In Leifsonia xyli subsp. xyli (strain CTCB07), this protein is Probable cytosol aminopeptidase.